Here is a 226-residue protein sequence, read N- to C-terminus: Chalcone--flavanone isomerase 1 (226 aa).

Substrate contacts are provided by threonine 52, asparagine 117, and threonine 194.

This sequence belongs to the chalcone isomerase family.

It catalyses the reaction a chalcone = a flavanone.. It functions in the pathway secondary metabolite biosynthesis; flavonoid biosynthesis. Functionally, catalyzes the intramolecular cyclization of bicyclic chalcones into tricyclic (S)-flavanones. Responsible for the isomerization of 4,2',4',6'-tetrahydroxychalcone (also termed chalcone) into naringenin. This is Chalcone--flavanone isomerase 1 (CHI1) from Lotus japonicus (Lotus corniculatus var. japonicus).